The sequence spans 142 residues: Large ribosomal subunit protein uL13 (142 aa).

The protein belongs to the universal ribosomal protein uL13 family. In terms of assembly, part of the 50S ribosomal subunit.

Functionally, this protein is one of the early assembly proteins of the 50S ribosomal subunit, although it is not seen to bind rRNA by itself. It is important during the early stages of 50S assembly. The sequence is that of Large ribosomal subunit protein uL13 from Haemophilus influenzae (strain PittGG).